The sequence spans 172 residues: Large ribosomal subunit protein bL9 (172 aa).

The protein belongs to the bacterial ribosomal protein bL9 family.

Its function is as follows. Binds to the 23S rRNA. In Chlamydia caviae (strain ATCC VR-813 / DSM 19441 / 03DC25 / GPIC) (Chlamydophila caviae), this protein is Large ribosomal subunit protein bL9.